We begin with the raw amino-acid sequence, 180 residues long: Progesterone receptor (180 aa).

An NR C4-type zinc finger spans residues 1–11 (KNCPACRLRKC). Positions 1 to 16 (KNCPACRLRKCCQAGM) form a DNA-binding region, nuclear receptor. At S60 the chain carries Phosphoserine. The 118-residue stretch at 63–180 (QEIQLFPPLI…QRMKESSFYS (118 aa)) folds into the NR LBD domain. The AF2; mediates transcriptional activation stretch occupies residues 71–180 (LINLLLSIEP…QRMKESSFYS (110 aa)). R150 contacts progesterone.

This sequence belongs to the nuclear hormone receptor family. NR3 subfamily. Interacts with SMARD1 and UNC45A. Interacts with CUEDC2; the interaction promotes ubiquitination, decreases sumoylation, and represses transcriptional activity. Interacts with PIAS3; the interaction promotes sumoylation of PR in a hormone-dependent manner, inhibits DNA-binding, and alters nuclear export. Interacts with SP1; the interaction requires ligand-induced phosphorylation by ERK1/2-MAPK. Interacts with PRMT2. Interacts with NCOA2 and NCOA1. Interacts with KLF9. Interacts with GTF2B. Post-translationally, phosphorylated on multiple serine sites. Several of these sites are hormone-dependent. In terms of processing, sumoylation is hormone-dependent and represses transcriptional activity. Sumoylation on all three sites is enhanced by PIAS3. Desumoylated by SENP1. Sumoylation is repressed by ubiquitination and modulated by phosphorylation. Ubiquitination is hormone-dependent and represses sumoylation. Post-translationally, palmitoylated by ZDHHC7 and ZDHHC21. Palmitoylation is required for plasma membrane targeting and for rapid intracellular signaling via ERK and AKT kinases and cAMP generation.

Its subcellular location is the nucleus. It localises to the cytoplasm. The steroid hormones and their receptors are involved in the regulation of eukaryotic gene expression and affect cellular proliferation and differentiation in target tissues. Transcriptional activator of several progesteron-dependent promoters in a variety of cell types. Involved in activation of SRC-dependent MAPK signaling on hormone stimulation. In Notamacropus eugenii (Tammar wallaby), this protein is Progesterone receptor (PGR).